The primary structure comprises 683 residues: Leucine-rich repeat protein soc-2 homolog (683 aa).

Over residues 1 to 19 the composition is skewed to low complexity; that stretch reads MNLCSSGATASTTSLSSTG. 2 disordered regions span residues 1-54 and 74-150; these read MNLC…SDVS and GTDE…IQAD. Gly residues predominate over residues 26 to 49; the sequence is GVPGGGAEGGGGGGGSGNSGGGGK. The span at 74–86 shows a compositional bias: low complexity; that stretch reads GTDELSNANSPAN. The segment covering 99-117 has biased composition (polar residues); that stretch reads QQPTGSNGHSHLHNENNAN. LRR repeat units lie at residues 164–185, 187–208, 210–231, 233–254, 256–277, 279–300, 302–323, 325–346, 348–370, 371–392, 395–416, 419–440, 443–464, 466–487, 489–510, 512–533, 535–556, 558–579, 581–603, and 605–626; these read GIKR…VKEC, HLTE…IGCL, SLRN…LQNC, QLKV…IYRL, SLTT…LRQL, NLTM…IGAL, NLTT…IGNC, NLSA…IGNL, SLVR…KNCK, SMDE…MLAS, GLTT…GPAQ, NVYS…IFSR, GLTK…IGTW, NMVE…IMNL, NLEI…IGNL, RLRI…IGLL, ELQR…IGHL, NLTH…IGSL, SLEN…LALC, and NLKY…IQAG. Over residues 661 to 671 the composition is skewed to gly residues; that stretch reads AGGNGGGGAAA. Residues 661–683 are disordered; it reads AGGNGGGGAAAAGGSASRSSDRR. Residues 672–683 are compositionally biased toward low complexity; it reads AGGSASRSSDRR.

It belongs to the SHOC2 family.

In terms of biological role, acts as a Ras effector and participates in MAPK pathway activation. Probably acts as a regulatory subunit of protein phosphatase that specifically dephosphorylates Raf kinase and stimulate Raf activity at specialized signaling complexes upon Ras activation. In Drosophila sechellia (Fruit fly), this protein is Leucine-rich repeat protein soc-2 homolog (Sur-8).